Reading from the N-terminus, the 295-residue chain is Small ribosomal subunit protein uS2 (295 aa).

A disordered region spans residues 247 to 295 (TDKGLTSKNVSKLKQTKKFSKTKNIDEETNTEFEQALNDADENKNSDNA).

It belongs to the universal ribosomal protein uS2 family.

The protein is Small ribosomal subunit protein uS2 of Rickettsia conorii (strain ATCC VR-613 / Malish 7).